The primary structure comprises 368 residues: N-acetylneuraminate epimerase (368 aa).

Residues 1-19 (MNKTITALAILMASFAANA) form the signal peptide. Kelch repeat units follow at residues 40 to 84 (TVYI…AFID), 86 to 137 (NLYV…FVHN), 139 to 173 (KAYV…KINA), 174 to 219 (HYFD…VNKG), 222 to 265 (TWLI…VAGG), 287 to 336 (ENYQ…PWNN), and 338 to 367 (LLII…VTVQ). Catalysis depends on Glu228, which acts as the Proton acceptor.

It belongs to the NanM family. In terms of assembly, homodimer.

It localises to the periplasm. It catalyses the reaction N-acetyl-alpha-neuraminate = N-acetyl-beta-neuraminate. In terms of biological role, converts alpha-N-acetylneuranimic acid (Neu5Ac) to the beta-anomer, accelerating the equilibrium between the alpha- and beta-anomers. Probably facilitates sialidase-negative bacteria to compete successfully for limited amounts of extracellular Neu5Ac, which is likely taken up in the beta-anomer. In addition, the rapid removal of sialic acid from solution might be advantageous to the bacterium to damp down host responses. In Escherichia coli O157:H7, this protein is N-acetylneuraminate epimerase.